Reading from the N-terminus, the 584-residue chain is HERV-H_2q24.3 provirus ancestral Env polyprotein (584 aa).

The N-terminal stretch at 1–35 (MIFAGKAPSNTSTLMKFYSLLLYSLLFSFPFLCHP) is a signal peptide. Residues 36-523 (LPLPSYLHHT…WALSNWMSWV (488 aa)) lie on the Extracellular side of the membrane. N-linked (GlcNAc...) asparagine glycosylation occurs at Asn47. The CXXC motif lies at 64–67 (CWLC). Residues Asn199, Asn222, Asn265, Asn283, Asn352, and Asn370 are each glycosylated (N-linked (GlcNAc...) asparagine). The interval 388-408 (VIPLIPLMVGLGLSASTVALG) is fusion peptide. The short motif at 454–470 (LQNRRGLDLLTAEKGGL) is the CKS-17 element. Cys471 and Cys478 form a disulfide bridge. The CX6CC motif lies at 471–479 (CIFLNEECC). N-linked (GlcNAc...) asparagine glycosylation is present at Asn483. A helical membrane pass occupies residues 524–544 (LPIVSPLIPIFLLLLFGPCIF). Residues 545 to 584 (RLVSQFIQNRIQAITNHSIRQMFLLTSPQYHPLPQDLPSA) lie on the Cytoplasmic side of the membrane.

This sequence belongs to the gamma type-C retroviral envelope protein family. HERV class-I H env subfamily. The surface (SU) and transmembrane (TM) proteins form a heterodimer. SU and TM are attached by noncovalent interactions or by a labile interchain disulfide bond. Specific enzymatic cleavages in vivo yield the mature SU and TM proteins. In terms of processing, the CXXC motif is highly conserved across a broad range of retroviral envelope proteins. It is thought to participate in the formation of a labile disulfide bond possibly with the CX6CC motif present in the transmembrane protein. Isomerization of the intersubunit disulfide bond to an SU intrachain disulfide bond is thought to occur upon receptor recognition in order to allow membrane fusion. Low expression in skin and testis. No expression in several cell lines.

The protein resides in the virion. Its subcellular location is the cell membrane. Its function is as follows. Retroviral envelope proteins mediate receptor recognition and membrane fusion during early infection. Endogenous envelope proteins may have kept, lost or modified their original function during evolution. This endogenous envelope protein has lost its original fusogenic properties but has immunosuppressive properties in vivo. SU mediates receptor recognition. In terms of biological role, TM anchors the envelope heterodimer to the viral membrane through one transmembrane domain. The other hydrophobic domain, called fusion peptide, mediates fusion of the viral membrane with the target cell membrane. The sequence is that of HERV-H_2q24.3 provirus ancestral Env polyprotein from Homo sapiens (Human).